A 102-amino-acid polypeptide reads, in one-letter code: DNA/RNA-binding protein Alba 2 (102 aa).

The DNA site is built by arginine 10, arginine 13, arginine 40, arginine 42, asparagine 43, arginine 46, and arginine 86.

The protein belongs to the histone-like Alba family. In terms of assembly, forms homodimers and homotetramers; oligomerization is enhanced and stabilized by DNA. Interacts with Alba 1.

It localises to the cytoplasm. Its subcellular location is the chromosome. Functionally, binds double-stranded DNA tightly but without sequence specificity. Involved in DNA compaction. The sequence is that of DNA/RNA-binding protein Alba 2 from Aeropyrum pernix (strain ATCC 700893 / DSM 11879 / JCM 9820 / NBRC 100138 / K1).